We begin with the raw amino-acid sequence, 120 residues long: Large ribosomal subunit protein uL22 (120 aa).

It belongs to the universal ribosomal protein uL22 family. In terms of assembly, part of the 50S ribosomal subunit.

In terms of biological role, this protein binds specifically to 23S rRNA; its binding is stimulated by other ribosomal proteins, e.g. L4, L17, and L20. It is important during the early stages of 50S assembly. It makes multiple contacts with different domains of the 23S rRNA in the assembled 50S subunit and ribosome. Its function is as follows. The globular domain of the protein is located near the polypeptide exit tunnel on the outside of the subunit, while an extended beta-hairpin is found that lines the wall of the exit tunnel in the center of the 70S ribosome. In Corynebacterium aurimucosum (strain ATCC 700975 / DSM 44827 / CIP 107346 / CN-1) (Corynebacterium nigricans), this protein is Large ribosomal subunit protein uL22.